The chain runs to 301 residues: Cytochrome c biogenesis protein CcsA (301 aa).

8 helical membrane passes run 13-33, 39-59, 73-93, 97-117, 146-166, 209-229, 236-256, and 270-290; these read NNIT…GLIF, VFYI…IILG, LYES…YLEY, LYLI…FSTL, MLSY…LVLI, TIGF…VWAN, WSWD…AAYL, and AYLA…VNFL.

The protein belongs to the CcmF/CycK/Ccl1/NrfE/CcsA family. In terms of assembly, may interact with Ccs1.

The protein localises to the plastid. The protein resides in the chloroplast thylakoid membrane. Functionally, required during biogenesis of c-type cytochromes (cytochrome c6 and cytochrome f) at the step of heme attachment. The chain is Cytochrome c biogenesis protein CcsA from Guillardia theta (Cryptophyte).